A 405-amino-acid polypeptide reads, in one-letter code: S-adenosylmethionine synthase (405 aa).

ATP is bound at residue 139–144; sequence GKGSAD.

Belongs to the AdoMet synthase 2 family. The cofactor is Mg(2+).

It carries out the reaction L-methionine + ATP + H2O = S-adenosyl-L-methionine + phosphate + diphosphate. It participates in amino-acid biosynthesis; S-adenosyl-L-methionine biosynthesis; S-adenosyl-L-methionine from L-methionine: step 1/1. Its function is as follows. Catalyzes the formation of S-adenosylmethionine from methionine and ATP. This chain is S-adenosylmethionine synthase, found in Sulfurisphaera tokodaii (strain DSM 16993 / JCM 10545 / NBRC 100140 / 7) (Sulfolobus tokodaii).